We begin with the raw amino-acid sequence, 515 residues long: Bifunctional purine biosynthesis protein PurH (515 aa).

The MGS-like domain maps to 1-145 (MTKRVLISVS…KNHASVTVVV (145 aa)).

Belongs to the PurH family.

The catalysed reaction is (6R)-10-formyltetrahydrofolate + 5-amino-1-(5-phospho-beta-D-ribosyl)imidazole-4-carboxamide = 5-formamido-1-(5-phospho-D-ribosyl)imidazole-4-carboxamide + (6S)-5,6,7,8-tetrahydrofolate. It catalyses the reaction IMP + H2O = 5-formamido-1-(5-phospho-D-ribosyl)imidazole-4-carboxamide. Its pathway is purine metabolism; IMP biosynthesis via de novo pathway; 5-formamido-1-(5-phospho-D-ribosyl)imidazole-4-carboxamide from 5-amino-1-(5-phospho-D-ribosyl)imidazole-4-carboxamide (10-formyl THF route): step 1/1. It functions in the pathway purine metabolism; IMP biosynthesis via de novo pathway; IMP from 5-formamido-1-(5-phospho-D-ribosyl)imidazole-4-carboxamide: step 1/1. The sequence is that of Bifunctional purine biosynthesis protein PurH from Streptococcus pneumoniae (strain JJA).